The primary structure comprises 179 residues: Large ribosomal subunit protein bL27c (179 aa).

Residues 1 to 51 (MAVSFSLVGAFKGLSLASSSSFLKGDFGAAFPVAPKFSVSFPLKSPLTIES) constitute a chloroplast transit peptide.

It belongs to the bacterial ribosomal protein bL27 family. Part of the 50S ribosomal subunit.

It localises to the plastid. It is found in the chloroplast. This chain is Large ribosomal subunit protein bL27c (RPL27), found in Nicotiana tabacum (Common tobacco).